The following is a 465-amino-acid chain: UDP-N-acetylglucosamine 1-carboxyvinyltransferase (465 aa).

22–23 provides a ligand contact to phosphoenolpyruvate; sequence KN. R94 is a UDP-N-acetyl-alpha-D-glucosamine binding site. The active-site Proton donor is the C119. 2-(S-cysteinyl)pyruvic acid O-phosphothioketal is present on C119. 2 residues coordinate UDP-N-acetyl-alpha-D-glucosamine: D313 and V335.

It belongs to the EPSP synthase family. MurA subfamily.

It is found in the cytoplasm. The catalysed reaction is phosphoenolpyruvate + UDP-N-acetyl-alpha-D-glucosamine = UDP-N-acetyl-3-O-(1-carboxyvinyl)-alpha-D-glucosamine + phosphate. It functions in the pathway cell wall biogenesis; peptidoglycan biosynthesis. Cell wall formation. Adds enolpyruvyl to UDP-N-acetylglucosamine. The chain is UDP-N-acetylglucosamine 1-carboxyvinyltransferase from Protochlamydia amoebophila (strain UWE25).